Reading from the N-terminus, the 139-residue chain is MSTQLVKIGTWGGNGGGRVDLSVLPRSLKSVTIRSGAAIDAIAFTYIGTDGKEHLAGPWGGGGGNPTTITLGSQEFVKGISGTFTNVVTNLKIVTNVTTYNFGQGGGTAFSLPLQSGSVVGFFGRAGALVDSIGVYVHI.

In terms of domain architecture, Jacalin-type lectin spans 5–139; sequence LVKIGTWGGN…VDSIGVYVHI (135 aa).

Expressed mainly in roots.

This is Protein GOS9 (GOS9) from Oryza sativa subsp. indica (Rice).